The sequence spans 224 residues: GTP cyclohydrolase 1 (224 aa).

Positions 1 to 20 (MKQEKTVSPTVENNRSAESR) are disordered. Zn(2+) is bound by residues cysteine 114, histidine 117, and cysteine 185.

It belongs to the GTP cyclohydrolase I family. In terms of assembly, toroid-shaped homodecamer, composed of two pentamers of five dimers.

The enzyme catalyses GTP + H2O = 7,8-dihydroneopterin 3'-triphosphate + formate + H(+). Its pathway is cofactor biosynthesis; 7,8-dihydroneopterin triphosphate biosynthesis; 7,8-dihydroneopterin triphosphate from GTP: step 1/1. In Chlorobaculum tepidum (strain ATCC 49652 / DSM 12025 / NBRC 103806 / TLS) (Chlorobium tepidum), this protein is GTP cyclohydrolase 1.